Consider the following 263-residue polypeptide: MPEVLAVRAWPLLLSLAVQLGATVGAPQPWRCAPCSAERMALCPPVPASCPELTRSAGCGCCPMCALPLGAACGVATARCARGLSCRALPGEPRPLHALTRGQGACMTTPSDEATDTKDTTSPENVSPESSEITQEQLLDNFHLMAESSEDLPILWNAISNYESLRALEISDVKKWKEPCQRELYKVLDRLAREQQKAGDKLYKFYLPNCNKNGFYHSKQCETSLEGEPGLCWCVYPWSGKRILGSVAVRGDPKCQQYFNLQN.

The signal sequence occupies residues 1-25 (MPEVLAVRAWPLLLSLAVQLGATVG). Positions 28–109 (QPWRCAPCSA…TRGQGACMTT (82 aa)) constitute an IGFBP N-terminal domain. 6 disulfide bridges follow: C32–C59, C35–C61, C43–C62, C50–C65, C73–C86, and C80–C106. The tract at residues 102 to 131 (GQGACMTTPSDEATDTKDTTSPENVSPESS) is disordered. Phosphoserine occurs at positions 122, 127, 130, 148, and 160. A compositionally biased stretch (polar residues) spans 122–131 (SPENVSPESS). Y162 bears the Phosphotyrosine mark. A Thyroglobulin type-1 domain is found at 177 to 255 (KEPCQRELYK…SVAVRGDPKC (79 aa)). Disulfide bonds link C180–C210, C221–C232, and C234–C255. Position 246 is a phosphoserine (S246). Residues 250–252 (RGD) carry the Cell attachment site motif.

Binds equally well IGF1 and IGF2. Interacts with integrin ITGA5:ITGB1. Interacts with VHL; this interaction inhibits HIF1A degradation.

It localises to the secreted. Functionally, multifunctional protein that plays a critical role in regulating the availability of IGFs such as IGF1 and IGF2 to their receptors and thereby regulates IGF-mediated cellular processes including cell migration, proliferation, differentiation or apoptosis in a cell-type specific manner. Also plays a positive role in cell migration by interacting with integrin ITGA5:ITGB1 through its RGD motif. Mechanistically, binding to integrins leads to activation of focal adhesion kinase/PTK2 and stimulation of the mitogen-activated protein kinase (MAPK) pathway. Regulates cardiomyocyte apoptosis by suppressing HIF-1alpha/HIF1A degradation through ubiquitination. The polypeptide is Insulin-like growth factor-binding protein 1 (IGFBP1) (Bos taurus (Bovine)).